Consider the following 108-residue polypeptide: Putative double-stranded DNA mimic protein PBPRA1522 (108 aa).

It belongs to the putative dsDNA mimic protein family.

In terms of biological role, may act as a double-stranded DNA (dsDNA) mimic. Probably regulates the activity of a dsDNA-binding protein. In Photobacterium profundum (strain SS9), this protein is Putative double-stranded DNA mimic protein PBPRA1522.